A 503-amino-acid chain; its full sequence is Basic immunoglobulin-like variable motif-containing protein (503 aa).

Basic and acidic residues predominate over residues 1–26 (MPNVAETERSNDSGNGEHKSERKSPE). 3 disordered regions span residues 1–33 (MPNVAETERSNDSGNGEHKSERKSPEENLQGAV), 152–184 (TTNSKHKSGNAKKQVSKRKTSDKKGRYQKECPQ), and 438–469 (ESQPPTHAQGIAKSESEDNISKKQHGRLGRSF). A compositionally biased stretch (basic residues) spans 155 to 172 (SKHKSGNAKKQVSKRKTS). Residues 173–184 (DKKGRYQKECPQ) are compositionally biased toward basic and acidic residues.

This sequence belongs to the BIVM family. In terms of tissue distribution, widely expressed. Expressed at higher level in spleen, ovary, small intestine, colon, peripheral blood leukocytes and liver. Also expressed in testis, ovary, aorta, appendix, trachea, pituitary gland, bladder, uterus, spinal cord, salivary gland, stomach, mammary gland and bone marrow. Weakly or not expressed in fetal spleen, adult thymus and certain cancer cell lines.

It localises to the cytoplasm. The protein resides in the nucleus. The sequence is that of Basic immunoglobulin-like variable motif-containing protein (BIVM) from Homo sapiens (Human).